Reading from the N-terminus, the 382-residue chain is Lactaldehyde reductase (382 aa).

Residues Asp-38, Asn-70, 97–98 (GS), 139–143 (TTAGT), Asn-150, Lys-161, and 180–184 (MMDGM) contribute to the NAD(+) site. Fe cation contacts are provided by Asp-195, His-199, His-262, and His-276.

Belongs to the iron-containing alcohol dehydrogenase family. As to quaternary structure, homodimer. Fe cation is required as a cofactor.

The enzyme catalyses (R)-propane-1,2-diol + NAD(+) = (R)-lactaldehyde + NADH + H(+). The catalysed reaction is (S)-propane-1,2-diol + NAD(+) = (S)-lactaldehyde + NADH + H(+). The protein operates within carbohydrate degradation; L-fucose degradation. The sequence is that of Lactaldehyde reductase (fucO) from Escherichia coli O157:H7.